Here is a 287-residue protein sequence, read N- to C-terminus: Tetraspanning orphan receptor (287 aa).

The Extracellular segment spans residues 1 to 27 (MSPSLVSDTQKHERGSHGVKIKHFSPY). A helical transmembrane segment spans residues 28–48 (IAVCVTTFSLAFCCFMVHGAI). The Cytoplasmic segment spans residues 49–55 (TRQPTHL). A helical transmembrane segment spans residues 56–76 (LPFFFIQVFDLIICLIHILGF). The Extracellular portion of the chain corresponds to 77–91 (MSSTSDIRLVIHTKT). Residues 92 to 114 (GPIYIKSTGLTFIILSISRMMLA) traverse the membrane as a helical segment. At 115-287 (FKAYCLGMVW…NASSNAHSSC (173 aa)) the chain is on the cytoplasmic side. The interval 165–190 (NNSIGNSGSPNEPNTRPRPDTITYDP) is disordered.

As to quaternary structure, interacts (via N-terminal extracellular domain) with human C2a.

It is found in the cell membrane. Cell surface receptor that binds to human complement C2a protein. This results in inhibition of the classical and lectin pathways of complement activation, probably due to interference with binding of C2a to C4b and interference with cleavage by C1 or MASP2 such that C3 convertase cannot be formed. This infers resistance to complement-mediated cell lysis, allowing parasite survival and infection. In Trypanosoma cruzi, this protein is Tetraspanning orphan receptor.